The sequence spans 655 residues: Threonine--tRNA ligase (655 aa).

A TGS domain is found at 1–66 (MIDLVFPDGS…TGERKFEILT (66 aa)). Positions 248-540 (DHRKLGKTMD…LLENFAGALP (293 aa)) are catalytic. Residues Cys-340, His-391, and His-517 each contribute to the Zn(2+) site.

Belongs to the class-II aminoacyl-tRNA synthetase family. As to quaternary structure, homodimer. Zn(2+) serves as cofactor.

Its subcellular location is the cytoplasm. The catalysed reaction is tRNA(Thr) + L-threonine + ATP = L-threonyl-tRNA(Thr) + AMP + diphosphate + H(+). Its function is as follows. Catalyzes the attachment of threonine to tRNA(Thr) in a two-step reaction: L-threonine is first activated by ATP to form Thr-AMP and then transferred to the acceptor end of tRNA(Thr). Also edits incorrectly charged L-seryl-tRNA(Thr). The protein is Threonine--tRNA ligase of Caulobacter vibrioides (strain ATCC 19089 / CIP 103742 / CB 15) (Caulobacter crescentus).